A 246-amino-acid polypeptide reads, in one-letter code: Octanoyltransferase (246 aa).

Positions proline 50–threonine 231 constitute a BPL/LPL catalytic domain. Substrate-binding positions include arginine 90–histidine 97, alanine 162–glycine 164, and glycine 175–serine 177. The active-site Acyl-thioester intermediate is the cysteine 193.

The protein belongs to the LipB family.

It is found in the cytoplasm. It carries out the reaction octanoyl-[ACP] + L-lysyl-[protein] = N(6)-octanoyl-L-lysyl-[protein] + holo-[ACP] + H(+). The protein operates within protein modification; protein lipoylation via endogenous pathway; protein N(6)-(lipoyl)lysine from octanoyl-[acyl-carrier-protein]: step 1/2. Functionally, catalyzes the transfer of endogenously produced octanoic acid from octanoyl-acyl-carrier-protein onto the lipoyl domains of lipoate-dependent enzymes. Lipoyl-ACP can also act as a substrate although octanoyl-ACP is likely to be the physiological substrate. The protein is Octanoyltransferase of Burkholderia pseudomallei (strain 1106a).